The primary structure comprises 372 residues: Probable peptidoglycan glycosyltransferase FtsW (372 aa).

At 1–12 (MQKKSTISWSYD) the chain is on the cytoplasmic side. The chain crosses the membrane as a helical span at residues 13–33 (AWIVICTLSLLALGLLMVASA). The Periplasmic segment spans residues 34–45 (SMVISDRQFGYP). Residues 46–66 (FHYFIRHLIYLSLGLTLAWVA) traverse the membrane as a helical segment. Residues 67-77 (SRVPIKVWKTY) lie on the Cytoplasmic side of the membrane. The chain crosses the membrane as a helical span at residues 78-98 (SGYLFLVGFLLLILVLAPVIG). Over 99 to 109 (KTVNGSRRWIQ) the chain is Periplasmic. A helical transmembrane segment spans residues 110–130 (LGFISLQVSEVVKFVTILYLA). The Cytoplasmic portion of the chain corresponds to 131–142 (SFLQRYQSEVQK). Residues 143-163 (ELKGFLKPMLLVGILSGLLLL) form a helical membrane-spanning segment. Topologically, residues 164–165 (EP) are periplasmic. The chain crosses the membrane as a helical span at residues 166 to 186 (DFGAAVVITMTCLALLFLAGV). Arginine 187 is a topological domain (cytoplasmic). Residues 188–208 (LWPFCVLLVLVAGSLILLAIL) form a helical membrane-spanning segment. The Periplasmic segment spans residues 209–277 (SPYRLQRLTS…LFAVLAEELG (69 aa)). Residues 278–298 (LIGEILLMGLFVLLIGRIILI) form a helical membrane-spanning segment. At 299 to 315 (GRRAENSNQLYSAYLAY) the chain is on the cytoplasmic side. The chain crosses the membrane as a helical span at residues 316–336 (GIALWLGLQVIINIGVTAGVL). Residues 337–342 (PTKGLT) are Periplasmic-facing. The helical transmembrane segment at 343 to 363 (LPFISYGGSSLLMNCLAIGVI) threads the bilayer. Over 364–372 (LRIAYETEN) the chain is Cytoplasmic.

Belongs to the SEDS family. FtsW subfamily.

It localises to the cell inner membrane. The enzyme catalyses [GlcNAc-(1-&gt;4)-Mur2Ac(oyl-L-Ala-gamma-D-Glu-L-Lys-D-Ala-D-Ala)](n)-di-trans,octa-cis-undecaprenyl diphosphate + beta-D-GlcNAc-(1-&gt;4)-Mur2Ac(oyl-L-Ala-gamma-D-Glu-L-Lys-D-Ala-D-Ala)-di-trans,octa-cis-undecaprenyl diphosphate = [GlcNAc-(1-&gt;4)-Mur2Ac(oyl-L-Ala-gamma-D-Glu-L-Lys-D-Ala-D-Ala)](n+1)-di-trans,octa-cis-undecaprenyl diphosphate + di-trans,octa-cis-undecaprenyl diphosphate + H(+). Its pathway is cell wall biogenesis; peptidoglycan biosynthesis. Functionally, peptidoglycan polymerase that is essential for cell division. This Coxiella burnetii (strain RSA 493 / Nine Mile phase I) protein is Probable peptidoglycan glycosyltransferase FtsW.